The primary structure comprises 1078 residues: Isoleucine--tRNA ligase (1078 aa).

The 'HIGH' region signature appears at 52–62; the sequence is PTANGKPALHH. A 'KMSKS' region motif is present at residues 637-641; sequence KMSKS. K640 is an ATP binding site.

It belongs to the class-I aminoacyl-tRNA synthetase family. IleS type 2 subfamily. In terms of assembly, monomer. It depends on Zn(2+) as a cofactor.

It localises to the cytoplasm. The enzyme catalyses tRNA(Ile) + L-isoleucine + ATP = L-isoleucyl-tRNA(Ile) + AMP + diphosphate. Catalyzes the attachment of isoleucine to tRNA(Ile). As IleRS can inadvertently accommodate and process structurally similar amino acids such as valine, to avoid such errors it has two additional distinct tRNA(Ile)-dependent editing activities. One activity is designated as 'pretransfer' editing and involves the hydrolysis of activated Val-AMP. The other activity is designated 'posttransfer' editing and involves deacylation of mischarged Val-tRNA(Ile). The protein is Isoleucine--tRNA ligase of Deinococcus radiodurans (strain ATCC 13939 / DSM 20539 / JCM 16871 / CCUG 27074 / LMG 4051 / NBRC 15346 / NCIMB 9279 / VKM B-1422 / R1).